The sequence spans 269 residues: Putative pyruvate, phosphate dikinase regulatory protein (269 aa).

147 to 154 (GVSRTSKT) is an ADP binding site.

It belongs to the pyruvate, phosphate/water dikinase regulatory protein family. PDRP subfamily.

It carries out the reaction N(tele)-phospho-L-histidyl/L-threonyl-[pyruvate, phosphate dikinase] + ADP = N(tele)-phospho-L-histidyl/O-phospho-L-threonyl-[pyruvate, phosphate dikinase] + AMP + H(+). The enzyme catalyses N(tele)-phospho-L-histidyl/O-phospho-L-threonyl-[pyruvate, phosphate dikinase] + phosphate + H(+) = N(tele)-phospho-L-histidyl/L-threonyl-[pyruvate, phosphate dikinase] + diphosphate. Bifunctional serine/threonine kinase and phosphorylase involved in the regulation of the pyruvate, phosphate dikinase (PPDK) by catalyzing its phosphorylation/dephosphorylation. The chain is Putative pyruvate, phosphate dikinase regulatory protein from Geotalea uraniireducens (strain Rf4) (Geobacter uraniireducens).